Consider the following 439-residue polypeptide: Ribosomal protein uS12 methylthiotransferase RimO (439 aa).

An MTTase N-terminal domain is found at 2–114 (SKLYLMSLGC…VDEMILKKTN (113 aa)). [4Fe-4S] cluster is bound by residues C11, C45, C77, C146, C150, and C153. The Radical SAM core domain occupies 132–363 (TGSNSHAFIK…VNEVIEKSFE (232 aa)).

The protein belongs to the methylthiotransferase family. RimO subfamily. It depends on [4Fe-4S] cluster as a cofactor.

Its subcellular location is the cytoplasm. It carries out the reaction L-aspartate(89)-[ribosomal protein uS12]-hydrogen + (sulfur carrier)-SH + AH2 + 2 S-adenosyl-L-methionine = 3-methylsulfanyl-L-aspartate(89)-[ribosomal protein uS12]-hydrogen + (sulfur carrier)-H + 5'-deoxyadenosine + L-methionine + A + S-adenosyl-L-homocysteine + 2 H(+). Its function is as follows. Catalyzes the methylthiolation of an aspartic acid residue of ribosomal protein uS12. This is Ribosomal protein uS12 methylthiotransferase RimO from Campylobacter jejuni (strain RM1221).